Consider the following 243-residue polypeptide: ATP synthase subunit a, chloroplastic (243 aa).

A run of 5 helical transmembrane segments spans residues 32–52 (AQVL…ALIA), 91–111 (IPFV…GALI), 130–150 (INTT…AGLN), 195–215 (LVVA…MMFL), and 216–236 (GLFT…AYIG).

Belongs to the ATPase A chain family. As to quaternary structure, F-type ATPases have 2 components, CF(1) - the catalytic core - and CF(0) - the membrane proton channel. CF(1) has five subunits: alpha(3), beta(3), gamma(1), delta(1), epsilon(1). CF(0) has four main subunits: a, b, b' and c.

It is found in the plastid. The protein resides in the chloroplast thylakoid membrane. Key component of the proton channel; it plays a direct role in the translocation of protons across the membrane. The polypeptide is ATP synthase subunit a, chloroplastic (Chaetosphaeridium globosum (Charophycean green alga)).